The chain runs to 352 residues: Probable gamma-glutamyl hydrolase 3 (352 aa).

Positions 1–19 are cleaved as a signal peptide; it reads MWRFCFFLSLLFFDVSAVK. Positions 49–352 constitute a Gamma-glutamyl hydrolase domain; sequence AADPNLNYKP…SGDDEVYIFT (304 aa). Cys-166 functions as the Nucleophile in the catalytic mechanism. His-279 is a catalytic residue.

This sequence belongs to the peptidase C26 family.

It is found in the vacuole. The protein resides in the secreted. It localises to the extracellular space. Its subcellular location is the cell wall. The enzyme catalyses (6S)-5,6,7,8-tetrahydrofolyl-(gamma-L-Glu)(n) + (n-1) H2O = (6S)-5,6,7,8-tetrahydrofolate + (n-1) L-glutamate. Its function is as follows. Cleaves the polyglutamate sidechains of folate polyglutamates in the vacuole. Is important for polyglutamyl tail length determination before vacuolar exit. Plays a role on folate stability and intracellular folate content. In Arabidopsis thaliana (Mouse-ear cress), this protein is Probable gamma-glutamyl hydrolase 3 (GGH3).